The following is a 467-amino-acid chain: Asparagine--tRNA ligase (467 aa).

This sequence belongs to the class-II aminoacyl-tRNA synthetase family. As to quaternary structure, homodimer.

The protein localises to the cytoplasm. The catalysed reaction is tRNA(Asn) + L-asparagine + ATP = L-asparaginyl-tRNA(Asn) + AMP + diphosphate + H(+). In Legionella pneumophila (strain Corby), this protein is Asparagine--tRNA ligase.